The following is a 77-amino-acid chain: Putative defensin-like protein 160 (77 aa).

The N-terminal stretch at 1 to 24 (MAKLSCSYFFILMLVFSALLMVEC) is a signal peptide. Cystine bridges form between C30–C77, C40–C59, C45–C71, and C49–C73.

Belongs to the DEFL family.

The protein resides in the secreted. The protein is Putative defensin-like protein 160 (LCR26) of Arabidopsis thaliana (Mouse-ear cress).